Reading from the N-terminus, the 352-residue chain is tRNA N6-adenosine threonylcarbamoyltransferase (352 aa).

2 residues coordinate Fe cation: His115 and His119. Substrate-binding positions include Leu138–Gly142, Asp171, Gly184, and Asn276. Residue Asp304 participates in Fe cation binding.

This sequence belongs to the KAE1 / TsaD family. The cofactor is Fe(2+).

The protein localises to the cytoplasm. It carries out the reaction L-threonylcarbamoyladenylate + adenosine(37) in tRNA = N(6)-L-threonylcarbamoyladenosine(37) in tRNA + AMP + H(+). In terms of biological role, required for the formation of a threonylcarbamoyl group on adenosine at position 37 (t(6)A37) in tRNAs that read codons beginning with adenine. Is involved in the transfer of the threonylcarbamoyl moiety of threonylcarbamoyl-AMP (TC-AMP) to the N6 group of A37, together with TsaE and TsaB. TsaD likely plays a direct catalytic role in this reaction. This is tRNA N6-adenosine threonylcarbamoyltransferase from Xanthomonas axonopodis pv. citri (strain 306).